Consider the following 370-residue polypeptide: MQTAARRSFDYDMPLIQTPTSACQIRQAWAKVADTPDRETADRLKDEIKALLKEKNAVLVAHYYVDPLIQDLALETGGCVGDSLEMARFGAEHEAGTLVVAGVRFMGESAKILCPEKTVLMPDLEAECSLDLGCPEEAFSAFCDQHPDRTVVVYANTSAAVKARADWVVTSSVALEIVSYLKSRGEKLIWGPDRHLGDYIRRETGADMLLWQGSCIVHNEFKGQELAALKAEHPDAVVLVHPESPQSVIELGDVVGSTSKLLKAAVSRPEKKFIVATDLGILHEMQKQAPDKEFIAAPTAGNGGSCKSCAFCPWMAMNSLGGIKYALTSGRNEILLDRKLGEAAKLPLQRMLDFAAGLKRGDVFNGMGPA.

2 residues coordinate iminosuccinate: histidine 62 and serine 83. Residue cysteine 128 participates in [4Fe-4S] cluster binding. Iminosuccinate-binding positions include 154 to 156 (YAN) and serine 171. Position 215 (cysteine 215) interacts with [4Fe-4S] cluster. Iminosuccinate is bound by residues 241–243 (HPE) and threonine 258. Cysteine 312 lines the [4Fe-4S] cluster pocket.

It belongs to the quinolinate synthase family. Type 1 subfamily. It depends on [4Fe-4S] cluster as a cofactor.

The protein resides in the cytoplasm. The enzyme catalyses iminosuccinate + dihydroxyacetone phosphate = quinolinate + phosphate + 2 H2O + H(+). It functions in the pathway cofactor biosynthesis; NAD(+) biosynthesis; quinolinate from iminoaspartate: step 1/1. Functionally, catalyzes the condensation of iminoaspartate with dihydroxyacetone phosphate to form quinolinate. The chain is Quinolinate synthase from Neisseria meningitidis serogroup C (strain 053442).